Reading from the N-terminus, the 371-residue chain is Protein OSB2, chloroplastic (371 aa).

The N-terminal 20 residues, 1 to 20, are a transit peptide targeting the chloroplast; that stretch reads MSLISKSLARIECSPFFYPR. Residues 45–64 are disordered; sequence GKTGNGERKQRAKAPAKTPE. In terms of domain architecture, SSB spans 97–195; sequence VANWVNLIGF…VLVQNLNFIQ (99 aa). PDF region stretches follow at residues 237–289 and 312–360; these read WNHL…PKLE and WKDL…PKLP.

In terms of tissue distribution, expressed in the floral abscission zone.

It localises to the plastid. It is found in the chloroplast. Binds preferentially single-stranded DNA. Does not bind to RNA. The chain is Protein OSB2, chloroplastic (OSB2) from Arabidopsis thaliana (Mouse-ear cress).